The primary structure comprises 355 residues: Acidic fibroblast growth factor intracellular-binding protein B (355 aa).

Interacts with IER2.

Its subcellular location is the nucleus. The protein resides in the endomembrane system. Functionally, mediates with IER2 FGF-signaling in Kupffer's vesicle ciliogenesis and in the establishment of laterality in the embryo. May be involved in mitogenic function of FGF1. The sequence is that of Acidic fibroblast growth factor intracellular-binding protein B from Danio rerio (Zebrafish).